The primary structure comprises 467 residues: Keratin, type 1 cytoskeletal 11 (467 aa).

The head stretch occupies residues 1–100 (MSYSSFSIAQ…GGTDFLLGTS (100 aa)). Positions 12-30 (SRVPSLSGTRSSSSYSLKS) are enriched in low complexity. Residues 12–32 (SRVPSLSGTRSSSSYSLKSDL) form a disordered region. The tract at residues 101–137 (GKEAMQNLNDRLADYLARVRSLEDRNRELEQKIREWY) is coil 1A. One can recognise an IF rod domain in the interval 101-413 (GKEAMQNLND…TLLEGDAGRS (313 aa)). Positions 138-156 (EKQGAGTKRKDFSHYFKII) are linker 1. Positions 157-248 (ADLQNQINAG…SHDEDMKALR (92 aa)) are coil 1B. The tract at residues 249-268 (SQLGGQVNVEVDAAPAEDLT) is linker 12. Residues 269–416 (KKLEIIRQRY…EGDAGRSHSS (148 aa)) are coil 2. Residues 409 to 430 (DAGRSHSSSHLSSTVSKDKVPV) form a disordered region. The segment at 417–463 (SHLSSTVSKDKVPVSSPNVITKVRTIVEEKINGQVISKKEYEGSPDQ) is tail.

This sequence belongs to the intermediate filament family. Heterotetramer of two type I and two type II keratins. In terms of tissue distribution, expressed in the outermost cell layers of skin epidermis (at protein level).

The chain is Keratin, type 1 cytoskeletal 11 from Protopterus aethiopicus (Marbled lungfish).